The following is an 859-amino-acid chain: Replication origin-binding protein (859 aa).

The 166-residue stretch at 70 to 235 (PLAADARRVT…AALRGAGSVH (166 aa)) folds into the Helicase ATP-binding domain. 83-90 (APMGSGKT) serves as a coordination point for ATP.

The protein belongs to the herpesviridae OriBP family. As to quaternary structure, homodimer. Interacts with the major DNA-binding protein. Interacts with the helicase/primase component UL8 and the polymerase accessory protein.

It localises to the host nucleus. In terms of biological role, functions as a docking protein to recruit essential components of the viral replication machinery to viral DNA origins. In the presence of the major DNA-binding protein, opens dsDNA leading to a conformational change in the origin that facilitates DNA unwinding and subsequent replication. This chain is Replication origin-binding protein (UL9), found in Bovine herpesvirus 1.1 (strain Cooper) (BoHV-1).